Here is a 380-residue protein sequence, read N- to C-terminus: Cytochrome b (380 aa).

4 helical membrane passes run 33–53 (FGSL…FLAM), 77–98 (WFIR…YLHI), 113–133 (WTIG…GYVL), and 178–198 (FFTF…VHLL). 2 residues coordinate heme b: His83 and His97. 2 residues coordinate heme b: His182 and His196. His201 contacts a ubiquinone. The next 4 membrane-spanning stretches (helical) occupy residues 226–246 (YKDL…ALFS), 288–308 (LGGV…PILH), 320–340 (LTQT…WIGG), and 347–367 (FVII…VLAP).

It belongs to the cytochrome b family. The cytochrome bc1 complex contains 3 respiratory subunits (MT-CYB, CYC1 and UQCRFS1), 2 core proteins (UQCRC1 and UQCRC2) and probably 6 low-molecular weight proteins. The cofactor is heme b.

It is found in the mitochondrion inner membrane. Its function is as follows. Component of the ubiquinol-cytochrome c reductase complex (complex III or cytochrome b-c1 complex) that is part of the mitochondrial respiratory chain. The b-c1 complex mediates electron transfer from ubiquinol to cytochrome c. Contributes to the generation of a proton gradient across the mitochondrial membrane that is then used for ATP synthesis. The sequence is that of Cytochrome b (mt-cyb) from Lampris guttatus (Opah).